Consider the following 243-residue polypeptide: Sec-independent protein translocase protein TatC (243 aa).

The next 7 helical transmembrane spans lie at 18-38 (VIII…NYVD), 70-90 (IAII…IWSF), 106-126 (MIPV…FTVF), 132-152 (FLLQ…KYIS), 153-173 (FALN…VVYI), 191-211 (YALL…DVIS), and 213-233 (LLMA…AKFI).

This sequence belongs to the TatC family. Forms a complex with TatA.

Its subcellular location is the cell membrane. Functionally, part of the twin-arginine translocation (Tat) system that transports large folded proteins containing a characteristic twin-arginine motif in their signal peptide across membranes. The chain is Sec-independent protein translocase protein TatC from Carboxydothermus hydrogenoformans (strain ATCC BAA-161 / DSM 6008 / Z-2901).